The primary structure comprises 346 residues: MTEQRIIASSSTREDDAADASIRPKRLADYLGQQPVREQMEIYIQAAKARGEAMDHVLIFGPPGLGKTTLSHVIANELGVSLRVTSGPVIEKAGDLAALLTNLQPHDVLFIDEIHRLSPVVEEVLYPAMEDFQIDIMIGDGPAARSIKIDLPPFTLIGATTRAGLLTAPLRDRFGIVQRLEFYSPQELTRIVSRSAAILGIDCTPEGAAEIARRARGTPRIANRLLRRVRDYAQVKAAGHIDLPVAQAAMQMLKVDPEGFDELDRRMLRTIVEHFDGGPVGVESLAASLSEERGTLEDVIEPYLIQQGFLIRTARGRMVTPKAYLHLGLKVPRERAPGIGEPGDLF.

The segment at 1 to 183 is large ATPase domain (RuvB-L); that stretch reads MTEQRIIASS…FGIVQRLEFY (183 aa). Residues Ile22, Arg23, Gly64, Lys67, Thr68, Thr69, 130 to 132, Arg173, Tyr183, and Arg220 contribute to the ATP site; that span reads EDF. Thr68 is a binding site for Mg(2+). The segment at 184 to 254 is small ATPAse domain (RuvB-S); it reads SPQELTRIVS…VAQAAMQMLK (71 aa). The segment at 257-346 is head domain (RuvB-H); that stretch reads PEGFDELDRR…PGIGEPGDLF (90 aa). DNA is bound by residues Arg293, Arg312, and Arg317.

This sequence belongs to the RuvB family. Homohexamer. Forms an RuvA(8)-RuvB(12)-Holliday junction (HJ) complex. HJ DNA is sandwiched between 2 RuvA tetramers; dsDNA enters through RuvA and exits via RuvB. An RuvB hexamer assembles on each DNA strand where it exits the tetramer. Each RuvB hexamer is contacted by two RuvA subunits (via domain III) on 2 adjacent RuvB subunits; this complex drives branch migration. In the full resolvosome a probable DNA-RuvA(4)-RuvB(12)-RuvC(2) complex forms which resolves the HJ.

The protein localises to the cytoplasm. The catalysed reaction is ATP + H2O = ADP + phosphate + H(+). The RuvA-RuvB-RuvC complex processes Holliday junction (HJ) DNA during genetic recombination and DNA repair, while the RuvA-RuvB complex plays an important role in the rescue of blocked DNA replication forks via replication fork reversal (RFR). RuvA specifically binds to HJ cruciform DNA, conferring on it an open structure. The RuvB hexamer acts as an ATP-dependent pump, pulling dsDNA into and through the RuvAB complex. RuvB forms 2 homohexamers on either side of HJ DNA bound by 1 or 2 RuvA tetramers; 4 subunits per hexamer contact DNA at a time. Coordinated motions by a converter formed by DNA-disengaged RuvB subunits stimulates ATP hydrolysis and nucleotide exchange. Immobilization of the converter enables RuvB to convert the ATP-contained energy into a lever motion, pulling 2 nucleotides of DNA out of the RuvA tetramer per ATP hydrolyzed, thus driving DNA branch migration. The RuvB motors rotate together with the DNA substrate, which together with the progressing nucleotide cycle form the mechanistic basis for DNA recombination by continuous HJ branch migration. Branch migration allows RuvC to scan DNA until it finds its consensus sequence, where it cleaves and resolves cruciform DNA. The chain is Holliday junction branch migration complex subunit RuvB from Xanthomonas euvesicatoria pv. vesicatoria (strain 85-10) (Xanthomonas campestris pv. vesicatoria).